Reading from the N-terminus, the 1423-residue chain is uncharacterized protein (1423 aa).

The first 28 residues, 1 to 28 (MTSSVRLAFLATLLLLLPLEAQIQQANS), serve as a signal peptide directing secretion. The Extracellular segment spans residues 29–1321 (ANVNQNVGQQ…RSREKQNFLT (1293 aa)). Residues N94, N306, N355, N483, N666, and N903 are each glycosylated (N-linked (GlcNAc...) asparagine). The NIDO domain maps to 184–347 (SFFGQSASKA…GRYMFRVDDV (164 aa)). Residues 638-818 (VKKKSLEMCH…FRCQMFYWRR (181 aa)) form the AMOP domain. Residues 1322–1342 (WLAIIGGIFGVLVFVILIFLC) traverse the membrane as a helical segment. Over 1343 to 1423 (CWIVKQKKKG…EDLHGLKTSV (81 aa)) the chain is Cytoplasmic. Residues 1364-1401 (SRSSMTGSRGGKKYPIHESEPLNEKRFDADTYRDDDFY) form a disordered region. Residues 1378 to 1401 (PIHESEPLNEKRFDADTYRDDDFY) show a composition bias toward basic and acidic residues.

It localises to the membrane. This is an uncharacterized protein from Caenorhabditis elegans.